A 301-amino-acid chain; its full sequence is Acetylglutamate kinase (301 aa).

Residues 68 to 69 (GG), Arg90, and Asn195 contribute to the substrate site.

The protein belongs to the acetylglutamate kinase family. ArgB subfamily.

The protein resides in the cytoplasm. The enzyme catalyses N-acetyl-L-glutamate + ATP = N-acetyl-L-glutamyl 5-phosphate + ADP. It participates in amino-acid biosynthesis; L-arginine biosynthesis; N(2)-acetyl-L-ornithine from L-glutamate: step 2/4. Functionally, catalyzes the ATP-dependent phosphorylation of N-acetyl-L-glutamate. The polypeptide is Acetylglutamate kinase (Pseudomonas savastanoi pv. phaseolicola (strain 1448A / Race 6) (Pseudomonas syringae pv. phaseolicola (strain 1448A / Race 6))).